The chain runs to 163 residues: Translation initiation factor IF-3-like (163 aa).

Belongs to the IF-3 family.

The polypeptide is Translation initiation factor IF-3-like (Nostoc sp. (strain PCC 7120 / SAG 25.82 / UTEX 2576)).